The sequence spans 347 residues: tRNA pseudouridine synthase D (347 aa).

Aspartate 81 serves as the catalytic Nucleophile. One can recognise a TRUD domain in the interval 158 to 304 (GVPNYFGNQR…MRHDRRAIAL (147 aa)).

This sequence belongs to the pseudouridine synthase TruD family.

The enzyme catalyses uridine(13) in tRNA = pseudouridine(13) in tRNA. Its function is as follows. Responsible for synthesis of pseudouridine from uracil-13 in transfer RNAs. This is tRNA pseudouridine synthase D from Vibrio vulnificus (strain YJ016).